A 577-amino-acid chain; its full sequence is NKAP family protein UM04995 (577 aa).

The tract at residues 1–479 (MPTLAERLGS…YGGALLPGEG (479 aa)) is disordered. Residues 20-31 (KSSHDREQELRS) show a composition bias toward basic and acidic residues. Residues 36–49 (SKQTSRNTAHQDLA) are compositionally biased toward polar residues. Basic and acidic residues predominate over residues 50–60 (SSERRSIDREL). Low complexity predominate over residues 70 to 89 (SPLSSPQNGSSPRRQRGSPS). 3 stretches are compositionally biased toward basic and acidic residues: residues 127–163 (PRED…DSRR), 170–193 (SGDR…REAP), and 265–297 (DSSS…DKHH). Basic residues-rich tracts occupy residues 298-316 (SSSR…RRSS) and 325-336 (SRHRHTRSSRSH). A compositionally biased stretch (acidic residues) spans 340-350 (DDDDDDDEDVD). Over residues 363 to 385 (KVSDGSDSGRSESETDSDSDARS) the composition is skewed to basic and acidic residues. Residues 386-395 (SRHRRRHHKS) show a composition bias toward basic residues. Composition is skewed to basic and acidic residues over residues 396–408 (DRSS…ESEK) and 417–439 (SESE…RRDS). Residues 529–570 (RKENQVISAEEKRTMLRLQAEEKAKKEREIVSQFKELVDTLQ) adopt a coiled-coil conformation.

It belongs to the NKAP family.

The sequence is that of NKAP family protein UM04995 from Mycosarcoma maydis (Corn smut fungus).